The following is a 464-amino-acid chain: Protein phosphatase 2C homolog 2 (464 aa).

In terms of domain architecture, PPM-type phosphatase spans 23–292 (AFGLCAMQGW…DNMSIVVVAL (270 aa)). 4 residues coordinate Mn(2+): aspartate 62, glycine 63, aspartate 234, and aspartate 283. An interaction with IRE1 region spans residues 174 to 355 (DGFVEMDRVN…KPQDKFTRDH (182 aa)). Disordered regions lie at residues 361-398 (SVTAADNDDPMDIDDTDADTDAENLDPSSQSKSKTSGP) and 434-464 (QLLQTMGHDPASSHPENDSNTDHKAGRSHLQ). The segment covering 366–384 (DNDDPMDIDDTDADTDAEN) has biased composition (acidic residues). Residues threonine 376 and threonine 380 each carry the phosphothreonine modification. Residues 386–396 (DPSSQSKSKTS) are compositionally biased toward polar residues. A compositionally biased stretch (basic and acidic residues) spans 448-458 (PENDSNTDHKA).

This sequence belongs to the PP2C family. Interacts with IRE1 (when phosphorylated); the interaction is direct and serves to attenuate the endoplasmic reticulum unfolded protein response. Interacts (when phosphorylated) with RAD53 (via domain FHA 1); the interaction is direct and serves to regulate DNA damage checkpoint signaling. Interacts with the ATG17-ATG29-ATG31 and ATG1-ATG13 supercomplex; to regulate induction of autophagy. Requires Mg(2+) as cofactor. The cofactor is Mn(2+).

Its subcellular location is the nucleus. It is found in the cytoplasm. The protein resides in the cytosol. The enzyme catalyses O-phospho-L-seryl-[protein] + H2O = L-seryl-[protein] + phosphate. It catalyses the reaction O-phospho-L-threonyl-[protein] + H2O = L-threonyl-[protein] + phosphate. In terms of biological role, dephosphorylating regulator for many key proteins. Dephosphorylates the cell cycle master regulator CDC28/cyclin-dependent kinase 1; its activity appears redundant with phosphatase PTC3. Dephosphorylates HOG1 at 'Thr-171', to attenuate activation of the stress-activated p38MAPK cascade; its activity appears redundant with phosphatase PTC3. Positively regulates both nonselective macroautophagy as well as the selective cytoplasm-to-vacuole (cvt) autophagy pathway and the genotoxin-induced targeted autophagy (GTA) pathway, possibly by dephosphorylating ATG13 to enable the interaction between the ATG17-ATG29-ATG31 and ATG1-ATG13 complexes; its activity appears redundant with phosphatase PTC3. Dephosphorylates RAD53, to regulate DNA damage checkpoint signaling. Dephosphorylates IRE1, to negatively regulate the endoplasmic reticulum unfolded protein response. This Saccharomyces cerevisiae (strain ATCC 204508 / S288c) (Baker's yeast) protein is Protein phosphatase 2C homolog 2 (PTC2).